We begin with the raw amino-acid sequence, 206 residues long: Ras-related protein RABG3a (206 aa).

15 to 22 (GDSGVGKT) provides a ligand contact to GTP. The short motif at 37-45 (YKATIGADF) is the Effector region element. GTP is bound by residues 63-67 (DTAGQ), 125-128 (NKID), and 158-159 (SA). 2 S-geranylgeranyl cysteine lipidation sites follow: Cys-204 and Cys-206. Cys-206 is subject to Cysteine methyl ester.

The protein belongs to the small GTPase superfamily. Rab family.

Its subcellular location is the cell membrane. Its function is as follows. Intracellular vesicle trafficking and protein transport. The protein is Ras-related protein RABG3a (RABG3A) of Arabidopsis thaliana (Mouse-ear cress).